We begin with the raw amino-acid sequence, 36 residues long: Pancreatic polypeptide (36 aa).

The residue at position 36 (tyrosine 36) is a Tyrosine amide.

It belongs to the NPY family.

The protein localises to the secreted. In terms of biological role, hormone secreted by pancreatic cells that acts as a regulator of pancreatic and gastrointestinal functions probably by signaling through the G protein-coupled receptor NPY4R2. The chain is Pancreatic polypeptide (PPY) from Erinaceus europaeus (Western European hedgehog).